Here is a 1547-residue protein sequence, read N- to C-terminus: Transposon Ty3-G Gag-Pol polyprotein (1547 aa).

Serine 2 is modified (N-acetylserine). The CCHC-type zinc finger occupies 265 to 282 (RLCFYCKKEGHRLNECRA). Residue aspartate 336 is the For protease activity; shared with dimeric partner of the active site. The region spanning 620–797 (LDNKFIVPSK…EETEFLGYSI (178 aa)) is the Reverse transcriptase domain. The Mg(2+) site is built by aspartate 686, aspartate 748, aspartate 749, aspartate 893, glutamate 936, and aspartate 961. The RNase H Ty3/gyspy-type domain occupies 893-1011 (DASKDGIGAV…VADAISRAVY (119 aa)). The interval 1106 to 1145 (HTLFGGHFGVTVTLAKISPIYYWPKLQHSIIQYIRTCVQC) is integrase-type zinc finger-like. Residues 1159-1324 (LQPLPIAEGR…SPFEIDLGYL (166 aa)) enclose the Integrase catalytic domain. Residues aspartate 1175 and aspartate 1236 each coordinate Mg(2+).

In terms of assembly, the protease is a homodimer, whose active site consists of two apposed aspartic acid residues. Initially, virus-like particles (VLPs) are composed of the structural unprocessed proteins Gag and Gag-Pol, and also contain the host initiator methionine tRNA (tRNA(i)-Met) which serves as a primer for minus-strand DNA synthesis, and a dimer of genomic Ty RNA. Processing of the polyproteins occurs within the particle and proceeds by an ordered pathway, called maturation. First, the protease (PR) is released by autocatalytic cleavage of the Gag-Pol polyprotein, and this cleavage is a prerequisite for subsequent processing at the remaining sites to release the mature structural and catalytic proteins. Maturation takes place prior to the RT reaction and is required to produce transposition-competent VLPs.

It localises to the cytoplasm. It is found in the nucleus. It catalyses the reaction DNA(n) + a 2'-deoxyribonucleoside 5'-triphosphate = DNA(n+1) + diphosphate. The catalysed reaction is Endonucleolytic cleavage to 5'-phosphomonoester.. Functionally, capsid protein (CA) is the structural component of the virus-like particle (VLP), forming the shell that encapsulates the genomic RNA-nucleocapsid complex. In terms of biological role, nucleocapsid protein p11 (NC) forms the nucleocore that coats the retro-elements dimeric RNA. Binds these RNAs through its zinc fingers. Promotes primer tRNA(i)-Met annealing to the multipartite primer-binding site (PBS), dimerization of Ty3 RNA and initiation of reverse transcription. The aspartyl protease (PR) mediates the proteolytic cleavages of the Gag and Gag-Pol polyproteins after assembly of the VLP. Its function is as follows. Reverse transcriptase/ribonuclease H (RT) is a multifunctional enzyme that catalyzes the conversion of the retro-elements RNA genome into dsDNA within the VLP. The enzyme displays a DNA polymerase activity that can copy either DNA or RNA templates, and a ribonuclease H (RNase H) activity that cleaves the RNA strand of RNA-DNA heteroduplexes during plus-strand synthesis and hydrolyzes RNA primers. The conversion leads to a linear dsDNA copy of the retrotransposon that includes long terminal repeats (LTRs) at both ends. Functionally, integrase (IN) targets the VLP to the nucleus, where a subparticle preintegration complex (PIC) containing at least integrase and the newly synthesized dsDNA copy of the retrotransposon must transit the nuclear membrane. Once in the nucleus, integrase performs the integration of the dsDNA into the host genome. This Saccharomyces cerevisiae (strain ATCC 204508 / S288c) (Baker's yeast) protein is Transposon Ty3-G Gag-Pol polyprotein (TY3B-G).